We begin with the raw amino-acid sequence, 357 residues long: Cyclin-dependent kinase-like 1 (357 aa).

One can recognise a Protein kinase domain in the interval Tyr4 to Phe287. Residues Ile10–Val18 and Lys33 each bind ATP. The [NKR]KIAxRE signature appears at Lys45–Glu51. Asp126 functions as the Proton acceptor in the catalytic mechanism.

This sequence belongs to the protein kinase superfamily. CMGC Ser/Thr protein kinase family. CDC2/CDKX subfamily. Highly expressed in kidney, and to a lower extent in ovary.

The protein resides in the cytoplasm. It localises to the nucleus. The enzyme catalyses L-seryl-[protein] + ATP = O-phospho-L-seryl-[protein] + ADP + H(+). The catalysed reaction is L-threonyl-[protein] + ATP = O-phospho-L-threonyl-[protein] + ADP + H(+). The polypeptide is Cyclin-dependent kinase-like 1 (Homo sapiens (Human)).